The following is a 182-amino-acid chain: Adenine phosphoribosyltransferase 4 (182 aa).

Belongs to the purine/pyrimidine phosphoribosyltransferase family. In terms of assembly, homodimer.

It localises to the cytoplasm. The catalysed reaction is AMP + diphosphate = 5-phospho-alpha-D-ribose 1-diphosphate + adenine. It functions in the pathway purine metabolism; AMP biosynthesis via salvage pathway; AMP from adenine: step 1/1. Its function is as follows. Catalyzes a salvage reaction resulting in the formation of AMP, that is energically less costly than de novo synthesis. May contribute to the recycling of adenine into adenylate nucleotides and the inactivation of cytokinins by phosphoribosylation. Possesses low activity toward adenine, but can efficiently convert cytokinins from free bases (active form) to the corresponding nucleotides (inactive form). This chain is Adenine phosphoribosyltransferase 4 (APT4), found in Arabidopsis thaliana (Mouse-ear cress).